The primary structure comprises 869 residues: Protein translocase subunit SecA (869 aa).

Residues Q85, 103-107 (GEGKT), and D508 contribute to the ATP site.

It belongs to the SecA family. As to quaternary structure, monomer and homodimer. Part of the essential Sec protein translocation apparatus which comprises SecA, SecYEG and auxiliary proteins SecDF. Other proteins may also be involved.

It localises to the cell membrane. The protein resides in the cytoplasm. It catalyses the reaction ATP + H2O + cellular proteinSide 1 = ADP + phosphate + cellular proteinSide 2.. In terms of biological role, part of the Sec protein translocase complex. Interacts with the SecYEG preprotein conducting channel. Has a central role in coupling the hydrolysis of ATP to the transfer of proteins into and across the cell membrane, serving as an ATP-driven molecular motor driving the stepwise translocation of polypeptide chains across the membrane. This is Protein translocase subunit SecA from Deinococcus deserti (strain DSM 17065 / CIP 109153 / LMG 22923 / VCD115).